Reading from the N-terminus, the 264-residue chain is Exodeoxyribonuclease YycJ (264 aa).

A divalent metal cation-binding residues include His-58, His-60, Asp-62, His-63, and Asp-145.

It belongs to the metallo-beta-lactamase superfamily. Fe(2+) is required as a cofactor. Zn(2+) serves as cofactor. Requires Mn(2+) as cofactor.

5'-&gt;3' double-stranded DNA exonuclease. May play a role in mutation mismatch repair (MMR). Required for accurate coordination of cell division with DNA replication. May play a role in cell wall metabolism. The polypeptide is Exodeoxyribonuclease YycJ (Bacillus anthracis).